Here is a 485-residue protein sequence, read N- to C-terminus: dTDP-4-amino-4,6-dideoxy-D-glucose ammonia-lyase (485 aa).

Positions 141, 145, and 148 each coordinate [4Fe-4S] cluster.

The protein belongs to the radical SAM superfamily. DesII family. In terms of assembly, monomer. [4Fe-4S] cluster serves as cofactor.

It catalyses the reaction dTDP-4-amino-4,6-dideoxy-alpha-D-glucose + AH2 + S-adenosyl-L-methionine = dTDP-3-dehydro-4,6-dideoxy-alpha-D-glucose + 5'-deoxyadenosine + L-methionine + A + NH4(+) + H(+). Involved in the biosynthesis of dTDP-alpha-D-desosamine, a sugar found in several bacterial macrolide antibiotics. Catalyzes the SAM-dependent deamination of dTDP-4-amino-4,6-deoxyglucose (dTDP-viosamine) to yield dTDP-3-keto-4,6-deoxyglucose. It can also catalyze the oxidative dehydrogenation of the non-physiological substrate dTDP-D-quinovose to dTDP-3-keto-6-deoxy-d-glucose. It can also deaminate dTDP-3-amino-3,6-deoxyglucose. This chain is dTDP-4-amino-4,6-dideoxy-D-glucose ammonia-lyase, found in Streptomyces venezuelae.